The primary structure comprises 448 residues: Protein kinase C and casein kinase substrate in neurons protein 2 (448 aa).

One can recognise an F-BAR domain in the interval 11-282 (VEVSSDSFWE…NIKTADAVED (272 aa)). Positions 25–274 (KRTVKRIDDG…NIYRELEQNI (250 aa)) form a coiled coil. Residues 315-386 (SRREKKKASD…DTNPFDEDTS (72 aa)) form a disordered region. Residues 329-358 (TGINQTGDQVSQPNKHSSVSSYEKNQSYPT) show a composition bias toward polar residues. Positions 367 to 369 (NPF) match the NPF1 motif. The NPF2 motif lies at 379-381 (NPF). The SH3 domain maps to 388–448 (VMEVRVRALY…YPANYVEPIQ (61 aa)).

This sequence belongs to the PACSIN family. Phosphorylated on serine residues. As to expression, detected in intestine, cardiac muscle, lung and brain (at protein level). Expressed in all tissues tested, including, gizzard, liver, cardiac muscle, skeletal muscle and skin.

It localises to the cytoplasm. It is found in the cytoskeleton. The protein resides in the cytoplasmic vesicle membrane. The protein localises to the cell projection. Its subcellular location is the ruffle membrane. It localises to the early endosome. It is found in the recycling endosome membrane. The protein resides in the cell membrane. The protein localises to the membrane. Its subcellular location is the caveola. It localises to the cell junction. It is found in the focal adhesion. Its function is as follows. Regulates the morphogenesis and endocytosis of caveolae. Lipid-binding protein that is able to promote the tubulation of the phosphatidic acid-containing membranes it preferentially binds. Plays a role in intracellular vesicle-mediated transport. Involved in the endocytosis of cell-surface receptors like the EGF receptor, contributing to its internalization in the absence of EGF stimulus. Essential for endothelial organization in sprouting angiogenesis, modulates CDH5-based junctions. Facilitates endothelial front-rear polarity during migration by recruiting EHD4 and MICALL1 to asymmetric adherens junctions between leader and follower cells. This Gallus gallus (Chicken) protein is Protein kinase C and casein kinase substrate in neurons protein 2 (PACSIN2).